The sequence spans 261 residues: Putative phosphite transport system permease protein HtxE (261 aa).

Positions glutamate 47–glutamine 253 constitute an ABC transmembrane type-1 domain. 3 helical membrane-spanning segments follow: residues leucine 122–alanine 142, arginine 203–glycine 220, and methionine 229–leucine 249.

Belongs to the binding-protein-dependent transport system permease family.

Its subcellular location is the cell inner membrane. Its function is as follows. Probably forms part of a binding-protein-dependent hypophosphite transporter. The polypeptide is Putative phosphite transport system permease protein HtxE (htxE) (Stutzerimonas stutzeri (Pseudomonas stutzeri)).